Here is a 298-residue protein sequence, read N- to C-terminus: Bifunctional protein FolD (298 aa).

NADP(+) is bound by residues glycine 166–serine 168, serine 191, and isoleucine 232.

Belongs to the tetrahydrofolate dehydrogenase/cyclohydrolase family. As to quaternary structure, homodimer.

The catalysed reaction is (6R)-5,10-methylene-5,6,7,8-tetrahydrofolate + NADP(+) = (6R)-5,10-methenyltetrahydrofolate + NADPH. It carries out the reaction (6R)-5,10-methenyltetrahydrofolate + H2O = (6R)-10-formyltetrahydrofolate + H(+). It functions in the pathway one-carbon metabolism; tetrahydrofolate interconversion. Its function is as follows. Catalyzes the oxidation of 5,10-methylenetetrahydrofolate to 5,10-methenyltetrahydrofolate and then the hydrolysis of 5,10-methenyltetrahydrofolate to 10-formyltetrahydrofolate. The polypeptide is Bifunctional protein FolD (Parvibaculum lavamentivorans (strain DS-1 / DSM 13023 / NCIMB 13966)).